Here is a 519-residue protein sequence, read N- to C-terminus: Probable carboxypeptidase S-like 2 (519 aa).

A helical transmembrane segment spans residues 25 to 45 (FNLIKIIIRNLLIGILLMLVL). A Zn(2+)-binding site is contributed by His151. The active site involves Asp153. Residue Asp184 participates in Zn(2+) binding. Glu218 functions as the Proton acceptor in the catalytic mechanism. Zn(2+)-binding residues include Glu219, Asp246, and His490.

Belongs to the peptidase M20A family. It depends on Zn(2+) as a cofactor.

The protein resides in the membrane. This chain is Probable carboxypeptidase S-like 2, found in Dictyostelium discoideum (Social amoeba).